The sequence spans 655 residues: Ubiquilin-3 (655 aa).

Positions 22 to 98 constitute a Ubiquitin-like domain; sequence IKVTVKTPKD…LVIKRQHRAM (77 aa). The interval 102 to 124 is disordered; sequence CPAASVPTQGPSPGSLPQPSSIY. A compositionally biased stretch (low complexity) spans 110 to 122; sequence QGPSPGSLPQPSS. Positions 194 to 233 constitute an STI1 domain; that stretch reads NPHMQQLIQHNPEIGHILNNPEIMRQTLEFLRNPAMMQEM. 3 disordered regions span residues 277-330, 364-399, and 412-447; these read PFAT…PDIR, ASALSQSQEPPPSVNRVPPSSPSSQEPGSGQPLPEE, and FLRYPTENSTGQGGDQDGAGKSSTGHSTNLPDLVSG. Positions 279–290 are enriched in low complexity; it reads ATATTDNATTTT. Basic and acidic residues predominate over residues 318–330; the sequence is GRQDGDQDAPDIR. Residues 377-395 show a composition bias toward low complexity; the sequence is VNRVPPSSPSSQEPGSGQP. Over residues 432 to 441 the composition is skewed to polar residues; sequence KSSTGHSTNL. The UBA domain occupies 609-655; it reads QLQPEAHFQVQLEQLRSMGFLNREANLQALIATGGDVDAAVEKLRQS.

As to expression, testis specific.

In Homo sapiens (Human), this protein is Ubiquilin-3 (UBQLN3).